The sequence spans 123 residues: MAKKRKKKLSSPEGISHIHASANNTIVTLTNTGGDAITWSSSGSIGYKGSKKSTPYAAGIAAETAAKVAIDLGLKKVIVKVNGTGSGKDTAIRSLHAAGLEISEIHDVTPIPHNGCRPPKKPR.

A disordered region spans residues 1–22 (MAKKRKKKLSSPEGISHIHASA).

The protein belongs to the universal ribosomal protein uS11 family. Part of the 30S ribosomal subunit. Interacts with proteins S7 and S18. Binds to IF-3.

Functionally, located on the platform of the 30S subunit, it bridges several disparate RNA helices of the 16S rRNA. Forms part of the Shine-Dalgarno cleft in the 70S ribosome. This is Small ribosomal subunit protein uS11 from Malacoplasma penetrans (strain HF-2) (Mycoplasma penetrans).